The chain runs to 537 residues: CTP synthase (537 aa).

Positions 1–268 (MPFKCIFLTG…ANFIGEKLKL (268 aa)) are amidoligase domain. Residue Ser14 participates in CTP binding. A UTP-binding site is contributed by Ser14. ATP is bound by residues 15–20 (SLGKGL) and Asp72. Residues Asp72 and Glu142 each contribute to the Mg(2+) site. CTP-binding positions include 149 to 151 (DIE), 188 to 193 (KSKPTQ), and Lys224. Residues 188–193 (KSKPTQ) and Lys224 contribute to the UTP site. In terms of domain architecture, Glutamine amidotransferase type-1 spans 293-533 (KIGVVGKYVQ…IEAALVYSKD (241 aa)). Residue Gly352 participates in L-glutamine binding. Residue Cys379 is the Nucleophile; for glutamine hydrolysis of the active site. L-glutamine is bound by residues 380–383 (LGMQ), Glu403, and Arg461. Active-site residues include His506 and Glu508.

This sequence belongs to the CTP synthase family. Homotetramer.

It carries out the reaction UTP + L-glutamine + ATP + H2O = CTP + L-glutamate + ADP + phosphate + 2 H(+). The enzyme catalyses L-glutamine + H2O = L-glutamate + NH4(+). It catalyses the reaction UTP + NH4(+) + ATP = CTP + ADP + phosphate + 2 H(+). Its pathway is pyrimidine metabolism; CTP biosynthesis via de novo pathway; CTP from UDP: step 2/2. Its activity is regulated as follows. Allosterically activated by GTP, when glutamine is the substrate; GTP has no effect on the reaction when ammonia is the substrate. The allosteric effector GTP functions by stabilizing the protein conformation that binds the tetrahedral intermediate(s) formed during glutamine hydrolysis. Inhibited by the product CTP, via allosteric rather than competitive inhibition. Catalyzes the ATP-dependent amination of UTP to CTP with either L-glutamine or ammonia as the source of nitrogen. Regulates intracellular CTP levels through interactions with the four ribonucleotide triphosphates. This Chlamydia pneumoniae (Chlamydophila pneumoniae) protein is CTP synthase.